The following is a 656-amino-acid chain: Hemocyanin subunit A (656 aa).

An N-terminal signal peptide occupies residues 1-18 (MWSLALATLFVLGTVIRA). 3 residues coordinate Cu cation: histidine 197, histidine 201, and histidine 227. A glycan (N-linked (GlcNAc...) asparagine) is linked at asparagine 313. Positions 348, 352, and 388 each coordinate Cu cation. Cysteines 558 and 606 form a disulfide.

The protein belongs to the tyrosinase family. Hemocyanin subfamily. 36-chain polymer consisting of 6 hexamers, each of which includes 4 different chains, A, B, C and D. Hemolymph.

The protein resides in the secreted. The protein localises to the extracellular space. Functionally, hemocyanins are copper-containing oxygen carriers occurring freely dissolved in the hemolymph of many mollusks and arthropods. This chain is Hemocyanin subunit A (HCA), found in Scutigera coleoptrata (House centipede).